Here is a 566-residue protein sequence, read N- to C-terminus: Chaperone Ric-8 (566 aa).

The protein belongs to the synembryn family. In terms of assembly, interacts with GDP-bound G(i)-alpha protein. Does not interact with G-alpha proteins when they are in complex with subunits beta and gamma. Interacts with Frq2 in a Ca(2+)-independent manner but does not interact with Frq1.

The protein resides in the cytoplasm. It localises to the cell cortex. The protein localises to the presynapse. Its function is as follows. Chaperone that specifically binds and folds some, but not all, nascent G alpha proteins prior to G protein heterotrimer formation, promoting their stability and activity. Also acts as a guanine nucleotide exchange factor (GEF) for G alpha proteins by stimulating exchange of bound GDP for free GTP. Plays a key role in asymmetric spindle positioning, a step for asymmetric cell division that generates cell diversity during development by activating G(i) alpha protein independently of G-protein coupled receptors. Required during gastrulation and sensory organ precursor (SOP) formation. Plays a role in positively regulating synapse number and neurotransmitter release. The polypeptide is Chaperone Ric-8 (ric8a) (Drosophila pseudoobscura pseudoobscura (Fruit fly)).